We begin with the raw amino-acid sequence, 309 residues long: Porphobilinogen deaminase (309 aa).

C242 bears the S-(dipyrrolylmethanemethyl)cysteine mark.

It belongs to the HMBS family. In terms of assembly, monomer. Dipyrromethane is required as a cofactor.

It catalyses the reaction 4 porphobilinogen + H2O = hydroxymethylbilane + 4 NH4(+). The protein operates within porphyrin-containing compound metabolism; protoporphyrin-IX biosynthesis; coproporphyrinogen-III from 5-aminolevulinate: step 2/4. Tetrapolymerization of the monopyrrole PBG into the hydroxymethylbilane pre-uroporphyrinogen in several discrete steps. The polypeptide is Porphobilinogen deaminase (Legionella pneumophila subsp. pneumophila (strain Philadelphia 1 / ATCC 33152 / DSM 7513)).